Consider the following 476-residue polypeptide: Glycogen synthase (476 aa).

Lys-15 lines the ADP-alpha-D-glucose pocket.

This sequence belongs to the glycosyltransferase 1 family. Bacterial/plant glycogen synthase subfamily.

It carries out the reaction [(1-&gt;4)-alpha-D-glucosyl](n) + ADP-alpha-D-glucose = [(1-&gt;4)-alpha-D-glucosyl](n+1) + ADP + H(+). Its pathway is glycan biosynthesis; glycogen biosynthesis. Functionally, synthesizes alpha-1,4-glucan chains using ADP-glucose. This chain is Glycogen synthase, found in Haemophilus influenzae (strain PittGG).